We begin with the raw amino-acid sequence, 107 residues long: Replication initiation control protein YabA (107 aa).

Histidine 81, cysteine 83, cysteine 97, and cysteine 100 together coordinate Zn(2+).

The protein belongs to the YabA family. As to quaternary structure, homotetramer. Interacts with both DnaA and DnaN, acting as a bridge between these two proteins. It depends on Zn(2+) as a cofactor.

It is found in the cytoplasm. The protein localises to the nucleoid. Functionally, involved in control of chromosome replication initiation. Inhibits the cooperative binding of DnaA to the oriC region, thus negatively regulating initiation of chromosome replication. Inhibits the ability of DnaA-ATP to form a helix on DNA; does not disassemble preformed DnaA-DNA helices. Decreases the residence time of DnaA on the chromosome at its binding sites (oriC, replication forks and promoter-binding sites). Tethers DnaA to the replication machinery via the DNA polymerase beta sliding clamp subunit (dnaN). Associates with oriC and other DnaA targets on the chromosome in a DnaA-dependent manner. In Streptococcus equi subsp. equi (strain 4047), this protein is Replication initiation control protein YabA.